Reading from the N-terminus, the 1318-residue chain is DNA-directed RNA polymerase subunit beta' (1318 aa).

Positions 221, 295, 302, and 305 each coordinate Zn(2+).

It belongs to the RNA polymerase beta' chain family. RpoC2 subfamily. In terms of assembly, in cyanobacteria the RNAP catalytic core is composed of 2 alpha, 1 beta, 1 beta', 1 gamma and 1 omega subunit. When a sigma factor is associated with the core the holoenzyme is formed, which can initiate transcription. The cofactor is Zn(2+).

The enzyme catalyses RNA(n) + a ribonucleoside 5'-triphosphate = RNA(n+1) + diphosphate. In terms of biological role, DNA-dependent RNA polymerase catalyzes the transcription of DNA into RNA using the four ribonucleoside triphosphates as substrates. The polypeptide is DNA-directed RNA polymerase subunit beta' (Synechococcus sp. (strain ATCC 27144 / PCC 6301 / SAUG 1402/1) (Anacystis nidulans)).